The primary structure comprises 348 residues: Dihydroorotase (348 aa).

The Zn(2+) site is built by H17 and H19. Residues 19–21 (HLR) and N45 contribute to the substrate site. Residues K103, H140, and H178 each coordinate Zn(2+). The residue at position 103 (K103) is an N6-carboxylysine. Position 140 (H140) interacts with substrate. Residue L223 participates in substrate binding. D251 is a Zn(2+) binding site. D251 is a catalytic residue. Substrate is bound by residues H255 and A267.

It belongs to the metallo-dependent hydrolases superfamily. DHOase family. Class II DHOase subfamily. As to quaternary structure, homodimer. Zn(2+) serves as cofactor.

The catalysed reaction is (S)-dihydroorotate + H2O = N-carbamoyl-L-aspartate + H(+). Its pathway is pyrimidine metabolism; UMP biosynthesis via de novo pathway; (S)-dihydroorotate from bicarbonate: step 3/3. Functionally, catalyzes the reversible cyclization of carbamoyl aspartate to dihydroorotate. The chain is Dihydroorotase from Escherichia coli (strain SMS-3-5 / SECEC).